Reading from the N-terminus, the 227-residue chain is Putative ankyrin repeat protein RF_0314 (227 aa).

3 ANK repeats span residues 94–126, 130–164, and 168–199; these read NGCT…DPNI, DGNT…DIEL, and LGWT…DNDF.

The chain is Putative ankyrin repeat protein RF_0314 from Rickettsia felis (strain ATCC VR-1525 / URRWXCal2) (Rickettsia azadi).